Here is a 58-residue protein sequence, read N- to C-terminus: Ribulose bisphosphate carboxylase large chain (58 aa).

Residues 1–2 (MS) constitute a propeptide that is removed on maturation. Residue Pro3 is modified to N-acetylproline. An N6,N6,N6-trimethyllysine modification is found at Lys14.

This sequence belongs to the RuBisCO large chain family. Type I subfamily. Heterohexadecamer of 8 large chains and 8 small chains.

It is found in the plastid. It localises to the chloroplast. The enzyme catalyses 2 (2R)-3-phosphoglycerate + 2 H(+) = D-ribulose 1,5-bisphosphate + CO2 + H2O. It catalyses the reaction D-ribulose 1,5-bisphosphate + O2 = 2-phosphoglycolate + (2R)-3-phosphoglycerate + 2 H(+). RuBisCO catalyzes two reactions: the carboxylation of D-ribulose 1,5-bisphosphate, the primary event in carbon dioxide fixation, as well as the oxidative fragmentation of the pentose substrate in the photorespiration process. Both reactions occur simultaneously and in competition at the same active site. The sequence is that of Ribulose bisphosphate carboxylase large chain (rbcL) from Euonymus maackii (Maack's spindle tree).